Reading from the N-terminus, the 743-residue chain is 1,4-alpha-glucan branching enzyme GlgB (743 aa).

Residue aspartate 416 is the Nucleophile of the active site. Glutamate 469 functions as the Proton donor in the catalytic mechanism.

The protein belongs to the glycosyl hydrolase 13 family. GlgB subfamily. In terms of assembly, monomer.

The catalysed reaction is Transfers a segment of a (1-&gt;4)-alpha-D-glucan chain to a primary hydroxy group in a similar glucan chain.. It functions in the pathway glycan biosynthesis; glycogen biosynthesis. Catalyzes the formation of the alpha-1,6-glucosidic linkages in glycogen by scission of a 1,4-alpha-linked oligosaccharide from growing alpha-1,4-glucan chains and the subsequent attachment of the oligosaccharide to the alpha-1,6 position. The sequence is that of 1,4-alpha-glucan branching enzyme GlgB from Shewanella baltica (strain OS155 / ATCC BAA-1091).